A 272-amino-acid polypeptide reads, in one-letter code: Energy-coupling factor transporter ATP-binding protein EcfA1 (272 aa).

The region spanning 2–237 (IKVSDVCFSY…KNIIEKAKID (236 aa)) is the ABC transporter domain. Position 37 to 44 (37 to 44 (GHNGSGKS)) interacts with ATP.

Belongs to the ABC transporter superfamily. Energy-coupling factor EcfA family. As to quaternary structure, forms a stable energy-coupling factor (ECF) transporter complex composed of 2 membrane-embedded substrate-binding proteins (S component), 2 ATP-binding proteins (A component) and 2 transmembrane proteins (T component).

The protein localises to the cell membrane. ATP-binding (A) component of a common energy-coupling factor (ECF) ABC-transporter complex. Unlike classic ABC transporters this ECF transporter provides the energy necessary to transport a number of different substrates. This is Energy-coupling factor transporter ATP-binding protein EcfA1 from Mesomycoplasma hyopneumoniae (strain J / ATCC 25934 / NCTC 10110) (Mycoplasma hyopneumoniae).